The primary structure comprises 363 residues: Phosphoserine aminotransferase (363 aa).

Position 42 (Arg-42) interacts with L-glutamate. Pyridoxal 5'-phosphate-binding positions include 76–77 (AS), Trp-101, Thr-151, Asp-170, and Gln-193. Lys-194 is modified (N6-(pyridoxal phosphate)lysine). 234–235 (NT) contacts pyridoxal 5'-phosphate.

Belongs to the class-V pyridoxal-phosphate-dependent aminotransferase family. SerC subfamily. In terms of assembly, homodimer. Pyridoxal 5'-phosphate serves as cofactor.

The protein resides in the cytoplasm. The enzyme catalyses O-phospho-L-serine + 2-oxoglutarate = 3-phosphooxypyruvate + L-glutamate. It carries out the reaction 4-(phosphooxy)-L-threonine + 2-oxoglutarate = (R)-3-hydroxy-2-oxo-4-phosphooxybutanoate + L-glutamate. It functions in the pathway amino-acid biosynthesis; L-serine biosynthesis; L-serine from 3-phospho-D-glycerate: step 2/3. Catalyzes the reversible conversion of 3-phosphohydroxypyruvate to phosphoserine and of 3-hydroxy-2-oxo-4-phosphonooxybutanoate to phosphohydroxythreonine. This chain is Phosphoserine aminotransferase, found in Listeria innocua serovar 6a (strain ATCC BAA-680 / CLIP 11262).